Here is a 438-residue protein sequence, read N- to C-terminus: Histidinol dehydrogenase (438 aa).

NAD(+) contacts are provided by Tyr137, Gln198, and Asn221. Positions 244, 266, and 269 each coordinate substrate. Residues Gln266 and His269 each contribute to the Zn(2+) site. Residues Glu334 and His335 each act as proton acceptor in the active site. His335, Asp368, Glu422, and His427 together coordinate substrate. Zn(2+) is bound at residue Asp368. Residue His427 participates in Zn(2+) binding.

Belongs to the histidinol dehydrogenase family. It depends on Zn(2+) as a cofactor.

The enzyme catalyses L-histidinol + 2 NAD(+) + H2O = L-histidine + 2 NADH + 3 H(+). It functions in the pathway amino-acid biosynthesis; L-histidine biosynthesis; L-histidine from 5-phospho-alpha-D-ribose 1-diphosphate: step 9/9. Catalyzes the sequential NAD-dependent oxidations of L-histidinol to L-histidinaldehyde and then to L-histidine. The protein is Histidinol dehydrogenase of Aromatoleum aromaticum (strain DSM 19018 / LMG 30748 / EbN1) (Azoarcus sp. (strain EbN1)).